We begin with the raw amino-acid sequence, 179 residues long: Large ribosomal subunit protein uL10 (179 aa).

It belongs to the universal ribosomal protein uL10 family. In terms of assembly, part of the ribosomal stalk of the 50S ribosomal subunit. The N-terminus interacts with L11 and the large rRNA to form the base of the stalk. The C-terminus forms an elongated spine to which L12 dimers bind in a sequential fashion forming a multimeric L10(L12)X complex.

Forms part of the ribosomal stalk, playing a central role in the interaction of the ribosome with GTP-bound translation factors. The protein is Large ribosomal subunit protein uL10 of Kosmotoga olearia (strain ATCC BAA-1733 / DSM 21960 / TBF 19.5.1).